A 180-amino-acid polypeptide reads, in one-letter code: Fucolectin-3 (180 aa).

The signal sequence occupies residues 1-22 (MEVKMIILLFQILAISTLKSDS). The F5/8 type C-like stretch occupies residues 31–179 (QENVALRGRA…VEVNVLFPAP (149 aa)). 4 residues coordinate Ca(2+): Asn58, Asp61, Asn63, and Ser72. Disulfide bonds link Cys73-Cys168, Cys104-Cys105, and Cys130-Cys146. His75 and Arg101 together coordinate alpha-L-fucose. The Cell attachment site signature appears at 101-103 (RGD). Arg108 contacts alpha-L-fucose. Positions 168 and 169 each coordinate Ca(2+).

It belongs to the fucolectin family. In terms of assembly, homotrimer. As to expression, parenchymal hepatocytes.

It localises to the secreted. The protein localises to the extracellular space. In terms of biological role, acts as a defensive agent. Recognizes blood group fucosylated oligosaccharides including A, B, H and Lewis B-type antigens. Does not recognize Lewis A antigen and has low affinity for monovalent haptens. In Anguilla japonica (Japanese eel), this protein is Fucolectin-3.